Consider the following 431-residue polypeptide: GDP-L-galactose phosphorylase 2 (431 aa).

The active-site Tele-GMP-histidine intermediate is the histidine 235. A compositionally biased stretch (acidic residues) spans 398–407 (EEEEEEELEE). The interval 398-417 (EEEEEEELEEQNSMNGGSFT) is disordered.

It belongs to the GDPGP1 family. As to quaternary structure, interacts with TLP1. As to expression, expressed in leaves, stems, roots, flowers and siliques.

The protein resides in the cytoplasm. Its subcellular location is the nucleus. It carries out the reaction GDP-beta-L-galactose + phosphate = beta-L-galactose 1-phosphate + GDP + H(+). It participates in cofactor biosynthesis; L-ascorbate biosynthesis via GDP-alpha-D-mannose pathway; L-ascorbate from GDP-alpha-D-mannose: step 2/5. Functionally, catalyzes a reaction of the Smirnoff-Wheeler pathway, the major route to ascorbate biosynthesis in plants. Acts as a phosphorylase rather than as a transferase. Uses preferentially GDP-L-galactose and GDP-D-glucose as substrates. Lower activity with GDP-L-fucose, very low activity with GDP-D-mannose, and no activity with UDP-D-glucose, UDP-D-galactose or ADP-D-glucose. Highly specific for inorganic phosphate as the guanylyl acceptor. The sequence is that of GDP-L-galactose phosphorylase 2 (VTC5) from Arabidopsis thaliana (Mouse-ear cress).